A 481-amino-acid polypeptide reads, in one-letter code: Guanine nucleotide exchange factor C9orf72 homolog (481 aa).

Residues 23–194 form the uDENN C9ORF72-type domain; the sequence is SPLLAATFAY…ELLASMKSHS (172 aa). In terms of domain architecture, cDENN C9ORF72-type spans 200–343; that stretch reads DIADTVLNDD…SELTAFWRAT (144 aa). The dDENN C9ORF72-type domain occupies 370–464; it reads VLHRDTLVKA…IKPGLHSFIF (95 aa). The tract at residues 461-481 is required for the homodimerization of the C9orf72-SMCR8 complex; it reads SFIFGRPFYTSVQERDVLMTF.

Component of the C9orf72-SMCR8 complex, at least composed of C9orf72, SMCR8 and WDR41. The complex is formed of two protomers, each individually consisting of one molecule each of C9orf72, SMCR8 and WDR41. The protomers homodimerize via an interaction between C9orf72 (via C-terminus) and SMCR8 (via N-terminus). Within each protomer SMCR8 (via DENN domain) acts as a bridging protein between WDR41 (via C-terminus and N-terminus) and C9orf72 (via C-terminus). The C9orf72-SMCR8 complex associates with the ULK1/ATG1 kinase complex. Interacts with ULK1/ATG1 kinase complex members ULK1, ATG13 and RB1CC1. Interacts with SMCR8; the interaction is direct. Interacts with HNRNPA1, HNRNPA2B1 and UBQLN2. Interacts with small Rab GTPase RAB1A; the interaction mediates recruitment of RAB1A to the ULK1/ATG1 kinase complex. Also interacts with small Rab GTPase RAB7A. Interacts with cofilin. Interacts with GTP-binding proteins ARF1 and ARF6. Interacts with the DLG4/PSD-95. Interacts with CARM1 (via PH domain-like fold). Interacts with RAB39A and RAB39B (in GDP-bound forms); functions as GEF for RAB39A and RAB39B. As to expression, expressed in postnatal cerebellum and cortex (at protein level). Neuronal expression is detected in several regions of the adult brain and spinal cord. Prominent expression also observed in embryonic and early postnatal neurons including retinal ganglion cells, sensory neurons in the olfactory epithelium and in dorsal root ganglia, and spinal motor neurons. Expressed in the developing cerebral cortex, cerebellum, olfactory bulb, hippocampus and spinal cord in the embryo and in P0 cortical neurons and astrocytes. Also expressed in non-neuronal tissues such as kidney and tooth. In the spleen, highly expressed in myeloid cells compared to B cell and T cell populations where expression is much lower. In the brain, highly expressed in microglia. Expressed in the forebrain, including in the glomerular layer of the olfactory bulb (at protein level).

It localises to the nucleus. Its subcellular location is the cytoplasm. The protein resides in the P-body. The protein localises to the stress granule. It is found in the endosome. It localises to the lysosome. Its subcellular location is the cytoplasmic vesicle. The protein resides in the autophagosome. The protein localises to the autolysosome. It is found in the secreted. It localises to the cell projection. Its subcellular location is the axon. The protein resides in the growth cone. The protein localises to the perikaryon. It is found in the dendrite. It localises to the presynapse. Its subcellular location is the postsynapse. Its function is as follows. Acts as a guanine-nucleotide releasing factor (GEF) for Rab GTPases by promoting the conversion of inactive RAB-GDP to the active form RAB-GTP. Acts as a GEF for RAB39A which enables HOPS-mediated autophagosome-lysosome membrane tethering and fusion in mammalian autophagy. Component of the C9orf72-SMCR8 complex where both subunits display GEF activity and that regulates autophagy. As part of the C9orf72-SMCR8-WDR41 (CSW) complex, functions as GEF for RAB8A, and RAB39B, thereby promoting autophagosome maturation. As part of the C9orf72-SMCR8 complex, also functions as GTPase activating protein (GAP) for RAB8A and RAB11A in vitro. The C9orf72-SMCR8 complex also acts as a regulator of autophagy initiation by interacting with the ULK1/ATG1 kinase complex and modulating its protein kinase activity. Promotes initiation of autophagy by regulating the RAB1A-dependent trafficking of the ULK1/ATG1 kinase complex to the phagophore which leads to autophagosome formation. Acts as a regulator of mTORC1 signaling by promoting phosphorylation of mTORC1 substrates. Plays a role in endosomal trafficking. May be involved in regulating the maturation of phagosomes to lysosomes. Promotes the lysosomal localization and lysosome-mediated degradation of CARM1 which leads to inhibition of starvation-induced lipid metabolism. Regulates actin dynamics in motor neurons by inhibiting the GTP-binding activity of ARF6, leading to ARF6 inactivation. This reduces the activity of the LIMK1 and LIMK2 kinases which are responsible for phosphorylation and inactivation of CFL1/cofilin, leading to cofilin activation. Positively regulates axon extension and axon growth cone size in spinal motor neurons. Required for SMCR8 protein expression and localization at pre- and post-synaptic compartments in the forebrain, also regulates protein abundance of RAB3A and GRIA1/GLUR1 in post-synaptic compartments in the forebrain and hippocampus. Plays a role within the hematopoietic system in restricting inflammation and the development of autoimmunity. The sequence is that of Guanine nucleotide exchange factor C9orf72 homolog from Mus musculus (Mouse).